A 213-amino-acid polypeptide reads, in one-letter code: Putative manganese efflux pump MntP (213 aa).

6 helical membrane-spanning segments follow: residues 3–23, 36–56, 67–87, 130–150, 152–172, and 187–207; these read ILSIVLTGFGLAMDAFAVSVA, ALKVALFFGGFQALMPLIGWG, AFDHWIAFILLSFIGGKMIFE, LAIATSIDALAVGVSFAFLGI, IVQTIIIIGIITFVLCFLGVI, and IVGGVILILIGINILLEHTGI.

It belongs to the MntP (TC 9.B.29) family.

The protein localises to the cell membrane. Its function is as follows. Probably functions as a manganese efflux pump. This chain is Putative manganese efflux pump MntP, found in Clostridium perfringens (strain 13 / Type A).